Consider the following 355-residue polypeptide: Guanine nucleotide-binding protein subunit alpha-14 (355 aa).

The region spanning 34-355 (RELKLLLLGT…QLNLREFNLV (322 aa)) is the G-alpha domain. The segment at 37 to 50 (KLLLLGTGESGKST) is G1 motif. Residues 42 to 49 (GTGESGKS), 176 to 182 (LRVRVPT), 201 to 205 (DVGGQ), 270 to 273 (NKKD), and A327 contribute to the GTP site. Mg(2+) is bound by residues S49 and T182. A G2 motif region spans residues 174–182 (DVLRVRVPT). The G3 motif stretch occupies residues 197–206 (FRMVDVGGQR). The interval 266-273 (ILFLNKKD) is G4 motif. Positions 325–330 (TCATDT) are G5 motif.

It belongs to the G-alpha family. G(q) subfamily. G proteins are composed of 3 units; alpha, beta and gamma. The alpha chain contains the guanine nucleotide binding site.

In terms of biological role, guanine nucleotide-binding proteins (G proteins) are involved as modulators or transducers in various transmembrane signaling systems. This chain is Guanine nucleotide-binding protein subunit alpha-14 (GNA14), found in Bos taurus (Bovine).